Reading from the N-terminus, the 209-residue chain is Neurotrophin-4 (209 aa).

Positions 1–21 (MLPRHSCSLLLFLFLLPSVPM) are cleaved as a signal peptide. Positions 22 to 79 (EPHPPSSTLPPFLAPEWDLLSPRVALSRGAPAGPPLLFLLEAGAYGEPAGAPANRSRR) are excised as a propeptide. Asparagine 75 is a glycosylation site (N-linked (GlcNAc...) asparagine). Intrachain disulfides connect cysteine 96–cysteine 169, cysteine 140–cysteine 198, and cysteine 157–cysteine 200.

This sequence belongs to the NGF-beta family.

It is found in the secreted. Its function is as follows. Target-derived survival factor for peripheral sensory sympathetic neurons. May promote ameloblast differentiation and subsequent reduction in proliferation of ameloblasts. The sequence is that of Neurotrophin-4 (Ntf4) from Mus musculus (Mouse).